Consider the following 172-residue polypeptide: Crossover junction endodeoxyribonuclease RuvC (172 aa).

Residues Asp11, Glu71, and Asp143 contribute to the active site. Residues Asp11, Glu71, and Asp143 each contribute to the Mg(2+) site.

It belongs to the RuvC family. Homodimer which binds Holliday junction (HJ) DNA. The HJ becomes 2-fold symmetrical on binding to RuvC with unstacked arms; it has a different conformation from HJ DNA in complex with RuvA. In the full resolvosome a probable DNA-RuvA(4)-RuvB(12)-RuvC(2) complex forms which resolves the HJ. It depends on Mg(2+) as a cofactor.

The protein localises to the cytoplasm. It catalyses the reaction Endonucleolytic cleavage at a junction such as a reciprocal single-stranded crossover between two homologous DNA duplexes (Holliday junction).. The RuvA-RuvB-RuvC complex processes Holliday junction (HJ) DNA during genetic recombination and DNA repair. Endonuclease that resolves HJ intermediates. Cleaves cruciform DNA by making single-stranded nicks across the HJ at symmetrical positions within the homologous arms, yielding a 5'-phosphate and a 3'-hydroxyl group; requires a central core of homology in the junction. The consensus cleavage sequence is 5'-(A/T)TT(C/G)-3'. Cleavage occurs on the 3'-side of the TT dinucleotide at the point of strand exchange. HJ branch migration catalyzed by RuvA-RuvB allows RuvC to scan DNA until it finds its consensus sequence, where it cleaves and resolves the cruciform DNA. This Brucella anthropi (strain ATCC 49188 / DSM 6882 / CCUG 24695 / JCM 21032 / LMG 3331 / NBRC 15819 / NCTC 12168 / Alc 37) (Ochrobactrum anthropi) protein is Crossover junction endodeoxyribonuclease RuvC.